The sequence spans 267 residues: Acetyl-coenzyme A carboxylase carboxyl transferase subunit beta 1 (267 aa).

Residues 9 to 267 (TWQACPKCGR…NYGIGRSAHG (259 aa)) enclose the CoA carboxyltransferase N-terminal domain. Zn(2+) is bound by residues cysteine 13, cysteine 16, cysteine 31, and cysteine 34. The C4-type zinc finger occupies 13 to 34 (CPKCGRHVHQRQWGTYQQCPYC).

This sequence belongs to the AccD/PCCB family. In terms of assembly, acetyl-CoA carboxylase is a heterohexamer composed of biotin carboxyl carrier protein (AccB), biotin carboxylase (AccC) and two subunits each of ACCase subunit alpha (AccA) and ACCase subunit beta (AccD). It depends on Zn(2+) as a cofactor.

The protein resides in the cytoplasm. It carries out the reaction N(6)-carboxybiotinyl-L-lysyl-[protein] + acetyl-CoA = N(6)-biotinyl-L-lysyl-[protein] + malonyl-CoA. Its pathway is lipid metabolism; malonyl-CoA biosynthesis; malonyl-CoA from acetyl-CoA: step 1/1. Component of the acetyl coenzyme A carboxylase (ACC) complex. Biotin carboxylase (BC) catalyzes the carboxylation of biotin on its carrier protein (BCCP) and then the CO(2) group is transferred by the transcarboxylase to acetyl-CoA to form malonyl-CoA. This is Acetyl-coenzyme A carboxylase carboxyl transferase subunit beta 1 from Lactiplantibacillus plantarum (strain ATCC BAA-793 / NCIMB 8826 / WCFS1) (Lactobacillus plantarum).